A 178-amino-acid chain; its full sequence is Inorganic pyrophosphatase (178 aa).

Substrate contacts are provided by Lys-30, Arg-44, and Tyr-56. Positions 66, 71, and 103 each coordinate Mg(2+). Position 142 (Tyr-142) interacts with substrate.

Belongs to the PPase family. In terms of assembly, homohexamer. Requires Mg(2+) as cofactor.

It localises to the cytoplasm. The catalysed reaction is diphosphate + H2O = 2 phosphate + H(+). Functionally, catalyzes the hydrolysis of inorganic pyrophosphate (PPi) forming two phosphate ions. This is Inorganic pyrophosphatase from Xanthomonas axonopodis pv. citri (strain 306).